We begin with the raw amino-acid sequence, 109 residues long: Iron-sulfur cluster assembly protein CyaY (109 aa).

Belongs to the frataxin family.

In terms of biological role, involved in iron-sulfur (Fe-S) cluster assembly. May act as a regulator of Fe-S biogenesis. The protein is Iron-sulfur cluster assembly protein CyaY of Bordetella avium (strain 197N).